Reading from the N-terminus, the 539-residue chain is MAKEIKFSEEARRAMLRGVDKLADAVKVTLGPKGRNVVLEKKFGSPLITNDGVTIAKEIELEDPFENMGAKLVAEVASKTNDVAGDGTTTATVLAQAMIREGLKNVTAGANPMGIRKGIEKAVAVAVEELKAISKPIKGKESIAQVAAISAADEEVGQLIAEAMERVGNDGVITLEESKGFTTELDVVEGMQFDRGYVSPYMITDTEKMEAVLENPYILITDKKISNIQDILPILEQVVQQGKPLLIIAEDVEGEALATLVVNKLRGTFTAVAVKAPGFGDRRKAMLEDIAILTGGEVISEELGRDLKSTTIASLGRASKVVVTKENTTIVDGAGDSERIKARINQIRAQLEETTSEFDREKLQERLAKLAGGVAVIKVGAATETELKERKLRIEDALNSTRAAVEEGIVAGGGTALMNVYNKVAAIEAEGDEATGVKIVLRAIEEPVRQIAQNAGLEGSVIVERLKTEKPGIGFNAATGEWVDMIEAGIVDPTKVTRSALQNAASVAAMFLTTEAVVADKPEENKGGNPGMPDMGGMM.

ATP-binding positions include 29 to 32, 86 to 90, Gly-413, 476 to 478, and Asp-492; these read TLGP, DGTTT, and NAA.

It belongs to the chaperonin (HSP60) family. In terms of assembly, forms a cylinder of 14 subunits composed of two heptameric rings stacked back-to-back. Interacts with the co-chaperonin GroES.

It is found in the cytoplasm. It carries out the reaction ATP + H2O + a folded polypeptide = ADP + phosphate + an unfolded polypeptide.. Functionally, together with its co-chaperonin GroES, plays an essential role in assisting protein folding. The GroEL-GroES system forms a nano-cage that allows encapsulation of the non-native substrate proteins and provides a physical environment optimized to promote and accelerate protein folding. This chain is Chaperonin GroEL, found in Geobacillus sp. (strain WCH70).